Reading from the N-terminus, the 325-residue chain is Lipoyl synthase (325 aa).

7 residues coordinate [4Fe-4S] cluster: Cys-72, Cys-77, Cys-83, Cys-98, Cys-102, Cys-105, and Ser-312. Positions 84–301 (FSSGTATFMI…AEEGMKMGFK (218 aa)) constitute a Radical SAM core domain.

It belongs to the radical SAM superfamily. Lipoyl synthase family. [4Fe-4S] cluster is required as a cofactor.

The protein localises to the cytoplasm. It catalyses the reaction [[Fe-S] cluster scaffold protein carrying a second [4Fe-4S](2+) cluster] + N(6)-octanoyl-L-lysyl-[protein] + 2 oxidized [2Fe-2S]-[ferredoxin] + 2 S-adenosyl-L-methionine + 4 H(+) = [[Fe-S] cluster scaffold protein] + N(6)-[(R)-dihydrolipoyl]-L-lysyl-[protein] + 4 Fe(3+) + 2 hydrogen sulfide + 2 5'-deoxyadenosine + 2 L-methionine + 2 reduced [2Fe-2S]-[ferredoxin]. Its pathway is protein modification; protein lipoylation via endogenous pathway; protein N(6)-(lipoyl)lysine from octanoyl-[acyl-carrier-protein]: step 2/2. Its function is as follows. Catalyzes the radical-mediated insertion of two sulfur atoms into the C-6 and C-8 positions of the octanoyl moiety bound to the lipoyl domains of lipoate-dependent enzymes, thereby converting the octanoylated domains into lipoylated derivatives. In Stutzerimonas stutzeri (strain A1501) (Pseudomonas stutzeri), this protein is Lipoyl synthase.